The sequence spans 439 residues: sn-glycerol-3-phosphate-binding periplasmic protein UgpB (439 aa).

Positions 1 to 25 (MFNNAIRKTSICVALTLAFSANAMA) are cleaved as a signal peptide. Sn-glycerol 3-phosphate contacts are provided by Y67, E91, S146, S272, G309, Y348, and R399.

Belongs to the bacterial solute-binding protein 1 family. The complex is composed of two ATP-binding proteins (UgpC), two transmembrane proteins (UgpA and UgpE) and a solute-binding protein (UgpB).

It is found in the periplasm. Part of the ABC transporter complex UgpBAEC involved in sn-glycerol-3-phosphate (G3P) import. Binds G3P. This Yersinia enterocolitica serotype O:8 / biotype 1B (strain NCTC 13174 / 8081) protein is sn-glycerol-3-phosphate-binding periplasmic protein UgpB (ugpB).